An 88-amino-acid polypeptide reads, in one-letter code: Large ribosomal subunit protein eL37 (88 aa).

Residues 1–24 (MTKGTTSFGKRHNKSHTQCRRCGR) form a disordered region. The span at 9 to 24 (GKRHNKSHTQCRRCGR) shows a compositional bias: basic residues. Zn(2+)-binding residues include C19, C22, C34, and C37. The C4-type zinc finger occupies 19-37 (CRRCGRKSYHIQKKTCSSC).

The protein belongs to the eukaryotic ribosomal protein eL37 family. Zn(2+) serves as cofactor.

Binds to the 23S rRNA. This chain is Large ribosomal subunit protein eL37 (RPL37), found in Schistosoma mansoni (Blood fluke).